Here is a 210-residue protein sequence, read N- to C-terminus: Superoxide dismutase [Mn], mitochondrial (210 aa).

Residues histidine 29, histidine 77, aspartate 164, and histidine 168 each contribute to the Mn(2+) site.

This sequence belongs to the iron/manganese superoxide dismutase family. Homotetramer. Mn(2+) serves as cofactor.

The protein resides in the mitochondrion matrix. The enzyme catalyses 2 superoxide + 2 H(+) = H2O2 + O2. Functionally, destroys superoxide anion radicals which are normally produced within the cells and which are toxic to biological systems. The protein is Superoxide dismutase [Mn], mitochondrial (sodB) of Aspergillus oryzae (strain ATCC 42149 / RIB 40) (Yellow koji mold).